A 36-amino-acid polypeptide reads, in one-letter code: uncharacterized protein (36 aa).

This is an uncharacterized protein from Archaeoglobus fulgidus (strain ATCC 49558 / DSM 4304 / JCM 9628 / NBRC 100126 / VC-16).